The chain runs to 414 residues: Putative competence-damage inducible protein (414 aa).

Belongs to the CinA family.

In Listeria monocytogenes serotype 4b (strain CLIP80459), this protein is Putative competence-damage inducible protein.